Consider the following 1596-residue polypeptide: Transcription factor Zelda (1596 aa).

3 disordered regions span residues 1-143 (MTSI…QQQQ), 209-273 (SGLG…GGAA), and 490-530 (TSPA…SVLP). The segment covering 13-24 (AAEALASSSATD) has biased composition (low complexity). Positions 25 to 53 (SGGGGAGGGGGGGGGGSGGPGAGGTGGVG) are enriched in gly residues. Residues 60-72 (NATISAAADSSDN) show a composition bias toward polar residues. Composition is skewed to low complexity over residues 73 to 123 (QPGT…ITHQ) and 226 to 267 (SAPS…QTPG). Gly residues predominate over residues 501 to 518 (GGPGQEGAAGAAPGGGYR). The C2H2-type 1 zinc finger occupies 552 to 576 (YNCTACNKWFTSSGHLKRHYNTTLH). 4 disordered regions span residues 578 to 813 (NAVK…TTTA), 825 to 945 (EDSN…MGML), 1017 to 1074 (GEQH…MPLT), and 1252 to 1322 (QMQH…TTLP). Positions 610–634 (RGNAAAAAAAAAAAASASGQGQQQQ) are enriched in low complexity. Residues 635–653 (PPIPPPPANVPPPEPPRSP) show a composition bias toward pro residues. Gly residues predominate over residues 656–668 (YGGGGGLGVGAMG). The segment covering 673–682 (SQYSASPSPT) has biased composition (polar residues). 2 stretches are compositionally biased toward low complexity: residues 683 to 709 (QQQQ…GYGY) and 719 to 753 (NASP…HHNS). A compositionally biased stretch (polar residues) spans 768–781 (PHNNNTTQMPSSQM). Over residues 796–813 (TTTRAPQITTTATTTTTA) the composition is skewed to low complexity. Positions 830 to 840 (THTHTHTHPNH) are enriched in basic residues. The span at 849–858 (SSSSSSSMAT) shows a compositional bias: low complexity. The segment covering 864 to 877 (QELRDQEQADDHLH) has biased composition (basic and acidic residues). Residues 879 to 916 (HQQASQQYLLSARHYHSSTPNTLSSSNTNPSTPSSNSP) are compositionally biased toward low complexity. Residues 904–1297 (SNTNPSTPSS…PLAKKRRGGN (394 aa)) form a transactivation activation domain (TAD) region. The segment covering 921–932 (RQEQQGTDFSRT) has biased composition (polar residues). Residues 933-944 (TPPPQPLPPMGM) are compositionally biased toward pro residues. Over residues 1019-1036 (QHQRQEADHHQQQRELHQ) the composition is skewed to basic and acidic residues. Low complexity-rich tracts occupy residues 1037-1062 (LDQQ…SPTS) and 1252-1275 (QMQH…QQQQ). Polar residues-rich tracts occupy residues 1276–1286 (ILADQTQTMAQ) and 1309–1322 (SSVG…TTLP). A C2H2-type 2 zinc finger spans residues 1326–1349 (IKCLECDKEFTKNCYLTQHNKSFH). The C2H2-type 3; degenerate zinc-finger motif lies at 1355 to 1378 (FRCQKCGKRFQSEDVYTTHLGRHR). 2 C2H2-type zinc fingers span residues 1384-1407 (HKCE…EAIH) and 1413-1435 (HMCD…LETH).

In terms of tissue distribution, zygotically expressed in the developing embryonic germ layers, nervous system, imaginal disk primordia and in larval wing and eye disks. As to expression, detected in the germline cells of the ovary, in unfertilized eggs and throughout early development. Later, it becomes mostly restricted to the nervous system and specific head regions. Also expressed in imaginal wing disks in third instar larvae.

It is found in the nucleus. It localises to the chromosome. Functionally, transcription factor required for zygotic genome activation (ZGA), a critical event in early embryonic development during which the developmental control passes from maternally provided mRNAs to the expression of the zygotic genome after fertilization. Binds to regulatory DNA sequences containing a 5'-CAGGTAG-3' sequence motif, which are highly enriched among developmental enhancers. Within 1 hour into development, or by the embryo's 8th nuclear cycle, binds the majority of its motifs genome-wide. Zelda-binding promotes nucleosome depletion and chromatin accessibility, thereby facilitating the binding of patterning transcription factors, including the binding of the dorsoventral patterning transcription factors dorsal (dl) and twist (twi), and the anteroposterior patterning transcription factors bicoid (bcd) and caudal (cad). Promotes the activity of patterning transcription factors, such as bcd and dl, by lowering the concentration threshold required for transcriptional activation. Required both for the earliest (minor) and major waves of transcription during ZGA. Also involved in maternal mRNA clearance during the maternal-to-zygote transition by promoting expression of microRNAs (miRNAs), such as miR-1, miR-9a and miR-309, which mediate degradation of maternally-loaded RNAs. Also involved in post-blastoderm development: nvolved in nervous system development by maintaining neuroblasts in an undifferentiated state and equired for wing disk development. Its function is as follows. Constitutes the main isoform expressed throughout development. Transcription factor required for zygotic genome activation (ZGA). Acts as a dominant negative inhibitor of transcription factor activity of isoform A. This chain is Transcription factor Zelda, found in Drosophila melanogaster (Fruit fly).